Reading from the N-terminus, the 400-residue chain is Leukosialin (400 aa).

Residues 1 to 19 form the signal peptide; that stretch reads MATLLLLLGVLVVSPDALG. Residues 20–253 lie on the Extracellular side of the membrane; that stretch reads STTAVQTPTS…PFRNPDENSR (234 aa). O-linked (GalNAc...) threonine glycans are attached at residues threonine 21, threonine 22, threonine 26, and threonine 28. Polar residues-rich tracts occupy residues 21 to 51 and 58 to 112; these read TTAV…SITS and TGDQ…TPHA. A disordered region spans residues 21–224; the sequence is TTAVQTPTSG…SSGASGPQVS (204 aa). O-linked (GalNAc...) serine glycosylation is found at serine 29 and serine 35. Threonine 36 carries an O-linked (GalNAc...) threonine glycan. O-linked (GalNAc...) serine glycans are attached at residues serine 37, serine 41, and serine 42. Residues threonine 46 and threonine 47 are each glycosylated (O-linked (GalNAc...) threonine). The O-linked (GalNAc...) serine glycan is linked to serine 48. O-linked (GalNAc...) threonine glycans are attached at residues threonine 50, threonine 58, and threonine 69. 2 O-linked (GalNAc...) serine glycosylation sites follow: serine 99 and serine 103. O-linked (GalNAc...) threonine glycosylation is found at threonine 109 and threonine 113. An O-linked (GalNAc...) serine glycan is attached at serine 114. 2 stretches are compositionally biased toward polar residues: residues 121–164 and 172–182; these read TANS…SRGT and ATVSLETSKGT. O-linked (GalNAc...) threonine glycosylation is found at threonine 136, threonine 137, threonine 173, and threonine 178. Low complexity predominate over residues 196 to 211; the sequence is TSTGTTGPPVTMTTGS. A compositionally biased stretch (polar residues) spans 212–224; that stretch reads LEPSSGASGPQVS. Asparagine 239 carries an N-linked (GlcNAc...) asparagine glycan. The helical transmembrane segment at 254 to 276 threads the bilayer; that stretch reads GMLPVAVLVALLAVIVLVALLLL. Residues 277-400 lie on the Cytoplasmic side of the membrane; sequence WRRRQKRRTG…EPEGGDGAAP (124 aa). The interval 278–308 is required for interaction with EZR, MSN and RDX and for co-localization to microvilli; that stretch reads RRRQKRRTGALVLSRGGKRNGVVDAWAGPAQ. The short motif at 282–296 is the Nuclear localization signal element; it reads KRRTGALVLSRGGKR. Position 291 is a phosphoserine (serine 291). Over residues 320–332 the composition is skewed to gly residues; it reads GGSGGDKGSGFPD. The interval 320–400 is disordered; sequence GGSGGDKGSG…EPEGGDGAAP (81 aa). Serine 336 is subject to Phosphoserine. Threonine 341 is modified (phosphothreonine). Position 351 is a phosphoserine (serine 351). Serine 355 carries the phosphoserine; by PKC/PRKCQ modification. A phosphoserine mark is found at serine 368 and serine 379.

As to quaternary structure, interacts with SIGLEC1. In terms of assembly, monomer. Interacts with CTNNB1. Interacts with RDX (via FERM domain), EZR and MSN. In terms of processing, glycosylated; has a high content of sialic acid and O-linked carbohydrate structures. Post-translationally, phosphorylation at Ser-355 is regulated by chemokines, requires its association with ERM proteins (EZR, RDX and MSN) and is essential for its function in the regulation of T-cell trafficking to lymph nodes. Has a high content of sialic acid and O-linked carbohydrate structures. In terms of processing, cleavage by CTSG releases its extracellular domain and triggers its intramembrane proteolysis by gamma-secretase releasing the CD43 cytoplasmic tail chain (CD43-ct) which translocates to the nucleus. Post-translationally, sumoylated. Cell surface of thymocytes, T-lymphocytes, neutrophils, plasma cells and myelomas.

The protein resides in the membrane. It localises to the cell projection. The protein localises to the microvillus. Its subcellular location is the uropodium. It is found in the nucleus. The protein resides in the PML body. Predominant cell surface sialoprotein of leukocytes which regulates multiple T-cell functions, including T-cell activation, proliferation, differentiation, trafficking and migration. Positively regulates T-cell trafficking to lymph-nodes via its association with ERM proteins (EZR, RDX and MSN). Negatively regulates Th2 cell differentiation and predisposes the differentiation of T-cells towards a Th1 lineage commitment. Promotes the expression of IFN-gamma by T-cells during T-cell receptor (TCR) activation of naive cells and induces the expression of IFN-gamma by CD4(+) T-cells and to a lesser extent by CD8(+) T-cells. Plays a role in preparing T-cells for cytokine sensing and differentiation into effector cells by inducing the expression of cytokine receptors IFNGR and IL4R, promoting IFNGR and IL4R signaling and by mediating the clustering of IFNGR with TCR. Acts as a major E-selectin ligand responsible for Th17 cell rolling on activated vasculature and recruitment during inflammation. Mediates Th17 cells, but not Th1 cells, adhesion to E-selectin. Acts as a T-cell counter-receptor for SIGLEC1. Functionally, protects cells from apoptotic signals, promoting cell survival. This Homo sapiens (Human) protein is Leukosialin (SPN).